The chain runs to 293 residues: uncharacterized protein (293 aa).

Positions 1–58 (MDLRRFITLKTVVEEGSFLRASQKLCCTQSTVTFHIQQLEQEFSVQLFEKIGRRMCLT) constitute an HTH lysR-type domain. A DNA-binding region (H-T-H motif) is located at residues 18–37 (FLRASQKLCCTQSTVTFHIQ).

Belongs to the LysR transcriptional regulatory family.

This is an uncharacterized protein from Escherichia coli (strain K12).